We begin with the raw amino-acid sequence, 368 residues long: FAD-dependent monooxygenase phomE (368 aa).

Position 11 (A11) interacts with FAD. Residues R140 and Y178 contribute to the active site. The FAD site is built by D249 and G262.

The protein belongs to the paxM FAD-dependent monooxygenase family. Monomer. It depends on FAD as a cofactor.

Its function is as follows. FAD-dependent monooxygenase; part of the gene cluster that mediates the biosynthesis of the phomopsins, a group of hexapeptide mycotoxins which infects lupins and causes lupinosis disease in livestock. The role of phomE within the phomopsins biosynthesis pathway has still to be determined. The pathway starts with the processing of the precursor phomA by several endopeptidases including kexin proteases as well as the cluster-specific S41 family peptidase phomP1 and the oligopeptidase phomG to produce 10 identical copies of the hexapeptide Tyr-Val-Ile-Pro-Ile-Asp. After being excised from the precursor peptide, the core peptides are cyclized and modified post-translationally by enzymes encoded within the gene cluster. The timing and order of proteolysis of the phomA precursor and PTMs are still unknown. Two tyrosinase-like enzymes, phomQ1 and phomQ2, catalyze the chlorination and hydroxylation of Tyr, respectively. PhomYb, is proposed to be involved in the construction of the macrocyclic structure. The other 4 ustYa family proteins may be involved in PTMs that generate the unique structure of phomopsin A. PhomYa is required for the hydroxylation of C-beta of Tyr. PhomYc, phomYd, and phomYe are responsible for the biosynthesis of 2,3-dehydroisoleucine (dIle), 2,3-dehydroaspartic acid (dAsp), and 3,4-dehydroproline (dPro), respectively. While dIle formation by phomYc is indispensable for the installation of dAsp by phomYd, the order of the other PTMs have not been elucidated yet. Most of the biosynthetic enzymes likely have broad substrate specificity, and thus, there might be a metabolic grid from a precursor to phomopsin A. The enzyme(s) responsible for the biosynthesis of 3,4-dehydrovaline (dVal) have also not been identified yet. Finally, phomM acts as an S-adenosylmethionine-dependent alpha-N-methyltransferase that catalyzes two successive N-methylation reactions, converting N-desmethyl-phomopsin A to phomopsin A and phomopsin A further to an N,N-dimethylated congener called phomopsin E. This Diaporthe leptostromiformis (Lupinosis disease fungus) protein is FAD-dependent monooxygenase phomE.